The primary structure comprises 299 residues: Probable lipid kinase YegS (299 aa).

Residues 2 to 133 (AEFPASLLIL…IDMAQVNKQT (132 aa)) enclose the DAGKc domain. ATP is bound by residues T40, 66-72 (GDGTINE), and T95. Mg(2+)-binding residues include L215, D218, and L220. The active-site Proton acceptor is E271.

This sequence belongs to the diacylglycerol/lipid kinase family. YegS lipid kinase subfamily. The cofactor is Mg(2+). Requires Ca(2+) as cofactor.

It localises to the cytoplasm. In terms of biological role, probably phosphorylates lipids; the in vivo substrate is unknown. The chain is Probable lipid kinase YegS from Escherichia coli O17:K52:H18 (strain UMN026 / ExPEC).